We begin with the raw amino-acid sequence, 947 residues long: MPSVSRAVCVQRASGNNGRRCRDGAAAAGRRSVVAQRARHGKPEVAIRSGSGGSARGGHCSPLRAVAAPIPTTKKRVFHFGKGKSEGNKAMKDLLGGKGANLAEMASIGLSVPPGFTVSTEACQQYQAAGKTLPAGLWEEIVEGLQWVEEYMAARLGDPARPLLLSVRSGAAVSMPGMMDTVLNLGLNDEVAAGLAAKSGDRFAYDSYRRFLDMFGNVVMDIPHALFEEKLEAMKAVKGLHNDTDLTATDLKELVAQYKDVYVEAKGEPFPSDPKKQLQLAVLAVFNSWDSPRAIKYRSINKITGLKGTAVNVQTMVFGNMGNTSGTGVLFTRNPSTGEKKLYGEFLVNAQGEDVVAGIRTPEDLDAMRDHMPEPYEELVENCKILESHYKEMMDIEFTVQENRLWMLQCRTGKRTGKGAVKIAVDMVNEGLVERRTALKMVEPGHLDQLLHPQFENPSGYKDKVIATGLPASPGAAVGQIVFTAEDAEAWHAQGKDVILVRTETSPEDVGGMHAAVGILTARGGMTSHAAVVARGWGKCCVSGCSSVRVNDASKIVVIEDKALHEGEWLSLNGSTGEVIIGKQPLCPPALSGDLETFMSWVDEVRKLKVMANADTPEDATTARQNGAEGIGLCRTEHMFFASDERIKAVRQMIMASSLELRQKALDRLLPYQRSDFEGIFRAMDGLPVTIRLLDPPLHEFLPEGHVEDMVRELCSETGAAQDDVLARVEKLSEVNPMLGFRGCRLGISYPELTEMQARAIFEAAITMTNQGIQVFPEIMVPLVGTPQELGHQVDVIRQIANKVFTDMGKTIGYKVGTMIEIPRAALVADEIAEQAEFFSFGTNDLTQMTFGYSRDDVGKFLPIYLSQGILQHDPFEVLDQRGVGELVKLATERGRKARPNLKVGICGEHGGEPLSVAFFAKAGLDYVSCSPFRVPIARLAAAQVLL.

A chloroplast-targeting transit peptide spans 1-71 (MPSVSRAVCV…PLRAVAAPIP (71 aa)). A disordered region spans residues 39 to 60 (RHGKPEVAIRSGSGGSARGGHC). Thr-527 carries the phosphothreonine; by PDRP1 modification. His-529 acts as the Tele-phosphohistidine intermediate in catalysis. Substrate-binding residues include Arg-635, Arg-692, Glu-821, Gly-842, Thr-843, Asn-844, and Asp-845. A Mg(2+)-binding site is contributed by Glu-821. Asp-845 lines the Mg(2+) pocket. Residue Cys-907 is the Proton donor of the active site.

Belongs to the PEP-utilizing enzyme family. As to quaternary structure, homotetramer. Mg(2+) serves as cofactor. In terms of processing, phosphorylation of Thr-527 in the dark inactivates the enzyme. Dephosphorylation upon light stimulation reactivates the enzyme. Phosphorylation increases during the first 20 days post-pollination and then remains constant through the 40-day mature seed stage. Reactivation by dephosphorylation during germination is negligible. In terms of tissue distribution, isoform 1 is only expressed in green leaves. Isoform 2 is found in roots, stems, rachis branches, leaf sheaths, green leaves and spikelets. The non-phosphorylated PPDK in mature seeds is endosperm-localized.

The protein localises to the plastid. It is found in the chloroplast. It localises to the cytoplasm. The enzyme catalyses pyruvate + phosphate + ATP = phosphoenolpyruvate + AMP + diphosphate + H(+). Its activity is regulated as follows. Activated by light-induced dephosphorylation. Inhibited by dark-induced phosphorylation. Both reactions are catalyzed by PDRP1. Formation of phosphoenolpyruvate. The cytoplasmic isoform supports the biosynthetic processes in the nascent endosperm and provides an efficient mechanism for glycolytic ATP synthesis in oxygen depleted tissues. May be involved in regulating the flux of carbon into starch and fatty acids of seeds and in the remobilization of nitrogen reserves in senescing leaves. This is Pyruvate, phosphate dikinase 1, chloroplastic (PPDK1) from Oryza sativa subsp. japonica (Rice).